Consider the following 197-residue polypeptide: Putative glutathione-dependent formaldehyde-activating enzyme (197 aa).

Residues 22–171 enclose the CENP-V/GFA domain; it reads FPGGKLYCHC…LKSLGLENYD (150 aa). Zn(2+)-binding residues include C29, C31, C50, C52, C55, C97, and C100.

Belongs to the Gfa family. It depends on Zn(2+) as a cofactor.

The catalysed reaction is S-(hydroxymethyl)glutathione = glutathione + formaldehyde. Its pathway is one-carbon metabolism; formaldehyde degradation; formate from formaldehyde (glutathione route): step 1/3. In terms of biological role, catalyzes the condensation of formaldehyde and glutathione to S-hydroxymethylglutathione. The polypeptide is Putative glutathione-dependent formaldehyde-activating enzyme (Emericella nidulans (strain FGSC A4 / ATCC 38163 / CBS 112.46 / NRRL 194 / M139) (Aspergillus nidulans)).